The following is a 475-amino-acid chain: Retrotransposon Gag-like protein 3 (475 aa).

Basic and acidic residues-rich tracts occupy residues 51 to 66 and 78 to 87; these read LLRK…KLPE and KTPEFKEPQK. Disordered regions lie at residues 51-101, 152-173, and 397-421; these read LLRK…EPPA, EPKN…APEY, and DPNP…ENQP. The CCHC-type zinc finger occupies 443 to 462; it reads RLCLYCGYPGHFARDCPVKP.

It is found in the nucleus. In terms of biological role, may function as a transcriptional regulator. Plays a role in postnatal myogenesis, may be involved in the regulation of satellite cells self-renewal. This Homo sapiens (Human) protein is Retrotransposon Gag-like protein 3.